The primary structure comprises 576 residues: Lipoprotein LpqB (576 aa).

A signal peptide spans 1-16 (MRRVTRTIAAAGAAIA). The N-palmitoyl cysteine moiety is linked to residue Cys17. Residue Cys17 is the site of S-diacylglycerol cysteine attachment.

Belongs to the LpqB lipoprotein family.

It is found in the cell membrane. In Bifidobacterium longum (strain NCC 2705), this protein is Lipoprotein LpqB.